The following is a 948-amino-acid chain: Valine--tRNA ligase (948 aa).

The short motif at 40–50 (PNVTGSLHMGH) is the 'HIGH' region element. Positions 551–555 (KMSKS) match the 'KMSKS' region motif. Position 554 (lysine 554) interacts with ATP. The stretch at 879-945 (LIDKGAELAR…GKLAEQHARI (67 aa)) forms a coiled coil.

It belongs to the class-I aminoacyl-tRNA synthetase family. ValS type 1 subfamily. In terms of assembly, monomer.

It is found in the cytoplasm. It carries out the reaction tRNA(Val) + L-valine + ATP = L-valyl-tRNA(Val) + AMP + diphosphate. Functionally, catalyzes the attachment of valine to tRNA(Val). As ValRS can inadvertently accommodate and process structurally similar amino acids such as threonine, to avoid such errors, it has a 'posttransfer' editing activity that hydrolyzes mischarged Thr-tRNA(Val) in a tRNA-dependent manner. This chain is Valine--tRNA ligase, found in Pseudomonas syringae pv. syringae (strain B728a).